We begin with the raw amino-acid sequence, 843 residues long: Translation initiation factor IF-2 (843 aa).

2 disordered regions span residues 50-72 (LKSS…KTTS) and 94-260 (QRSP…TGPV). Residues 96 to 135 (SPEEIQAEQKREQDERRAAENAARDKVDADVRQRNEEQAR) show a composition bias toward basic and acidic residues. A compositionally biased stretch (low complexity) spans 139 to 173 (TATAAAAPAAKAEPAPAAAAPAPAPVVADAPASED). Basic and acidic residues-rich tracts occupy residues 174–203 (AAAR…RGEA) and 227–236 (TTDEESDGAR). The span at 237-250 (RGRGGKGKLKKRNQ) shows a compositional bias: basic residues. The tr-type G domain maps to 343 to 516 (SRAPVVTVMG…EVLELTATPT (174 aa)). The interval 352–359 (GHVDHGKT) is G1. Residue 352-359 (GHVDHGKT) participates in GTP binding. Residues 377–381 (GITQH) are G2. Residues 398-401 (DTPG) are G3. GTP-binding positions include 398-402 (DTPGH) and 452-455 (NKID). The G4 stretch occupies residues 452–455 (NKID). Residues 488 to 490 (SAK) form a G5 region.

It belongs to the TRAFAC class translation factor GTPase superfamily. Classic translation factor GTPase family. IF-2 subfamily.

It is found in the cytoplasm. Its function is as follows. One of the essential components for the initiation of protein synthesis. Protects formylmethionyl-tRNA from spontaneous hydrolysis and promotes its binding to the 30S ribosomal subunits. Also involved in the hydrolysis of GTP during the formation of the 70S ribosomal complex. The protein is Translation initiation factor IF-2 of Pseudomonas putida (strain W619).